The primary structure comprises 546 residues: Nuclear pore complex protein Nup58 (546 aa).

17 tandem repeats follow at residues 22-23 (FG), 36-37 (FG), 45-46 (FG), 64-65 (FG), 73-74 (FG), 82-83 (FG), 92-93 (FG), 101-102 (FG), 110-111 (FG), 119-120 (FG), 128-129 (FG), 137-138 (FG), 146-147 (FG), 155-156 (FG), 166-167 (FG), 197-198 (FG), and 199-200 (FG). The segment at 22-200 (FGARPATTTA…TTAPPAFGFG (179 aa)) is 17 X 2 AA repeats of F-G.

This sequence belongs to the NUP58 family. As to quaternary structure, component of the nuclear pore complex. Interacts with Nup54. Interacts (via C-terminus) with fs(1)Yb; this interaction occurs in a RNA-independent manner. Interacts with sbr/nxf1. Interacts with Nxt1. O-glycosylated; contains O-GlcNAc. O-GlcNAcylation increases with increasing ambient temperature.

It is found in the nucleus. It localises to the nuclear pore complex. Component of the nuclear pore complex, a complex required for the trafficking across the nuclear membrane. Together with Nup54, required for transposable element silencing regulation in ovarian follicle cells. By interacting with the nuclear (Nxf1/Nxt1) and cytosolic (fs(1)Yb) components of the flamenco (flam) transcripts processing pathway, enables export and subsequent piRNA production. The protein is Nuclear pore complex protein Nup58 of Drosophila melanogaster (Fruit fly).